The following is a 619-amino-acid chain: ATP-dependent RNA helicase dbp9 (619 aa).

The tract at residues 1–30 (MKRKLDANDVPSTEVAEEKETKDADNTDFE) is disordered. Residues 16–25 (AEEKETKDAD) are compositionally biased toward basic and acidic residues. Positions 27–55 (TDFESLNLDPRLRQALIREQFTKPTPVQS) match the Q motif motif. The Helicase ATP-binding domain maps to 58–236 (IPLALEGKDI…GLFCRSPVIL (179 aa)). 71 to 78 (AKTGSGKT) provides a ligand contact to ATP. Positions 184–187 (DEAD) match the DEAD box motif. The Helicase C-terminal domain occupies 247–484 (GISQFVVRCA…EVKPYHFEMK (238 aa)). Disordered regions lie at residues 339 to 390 (SRTS…GKAK) and 582 to 619 (GDNRIRKAREKNRGKGKGRKPSGVRKVDPLKTFNRGRK). A compositionally biased stretch (basic and acidic residues) spans 345 to 362 (KSKEATDGDDEAKDKMGS). Basic residues predominate over residues 587–604 (RKAREKNRGKGKGRKPSG).

The protein belongs to the DEAD box helicase family. DDX56/DBP9 subfamily.

It localises to the nucleus. It is found in the nucleolus. The catalysed reaction is ATP + H2O = ADP + phosphate + H(+). Its function is as follows. ATP-binding RNA helicase involved in the biogenesis of 60S ribosomal subunits and is required for the normal formation of 25S and 5.8S rRNAs. The chain is ATP-dependent RNA helicase dbp9 (dbp9) from Neosartorya fischeri (strain ATCC 1020 / DSM 3700 / CBS 544.65 / FGSC A1164 / JCM 1740 / NRRL 181 / WB 181) (Aspergillus fischerianus).